A 140-amino-acid chain; its full sequence is Large ribosomal subunit protein bL17 (140 aa).

Belongs to the bacterial ribosomal protein bL17 family. As to quaternary structure, part of the 50S ribosomal subunit. Contacts protein L32.

The chain is Large ribosomal subunit protein bL17 from Paracoccus denitrificans (strain Pd 1222).